A 379-amino-acid chain; its full sequence is Queuine tRNA-ribosyltransferase (379 aa).

Catalysis depends on Asp93, which acts as the Proton acceptor. Substrate is bound by residues 93-97 (DSGGF), Asp147, Gln191, and Gly218. Residues 249-255 (GVGKPED) form an RNA binding region. Asp268 serves as the catalytic Nucleophile. Residues 273–277 (TRNAR) form an RNA binding; important for wobble base 34 recognition region. The Zn(2+) site is built by Cys306, Cys308, Cys311, and His337.

Belongs to the queuine tRNA-ribosyltransferase family. In terms of assembly, homodimer. Within each dimer, one monomer is responsible for RNA recognition and catalysis, while the other monomer binds to the replacement base PreQ1. Zn(2+) serves as cofactor.

It catalyses the reaction 7-aminomethyl-7-carbaguanine + guanosine(34) in tRNA = 7-aminomethyl-7-carbaguanosine(34) in tRNA + guanine. It functions in the pathway tRNA modification; tRNA-queuosine biosynthesis. Functionally, catalyzes the base-exchange of a guanine (G) residue with the queuine precursor 7-aminomethyl-7-deazaguanine (PreQ1) at position 34 (anticodon wobble position) in tRNAs with GU(N) anticodons (tRNA-Asp, -Asn, -His and -Tyr). Catalysis occurs through a double-displacement mechanism. The nucleophile active site attacks the C1' of nucleotide 34 to detach the guanine base from the RNA, forming a covalent enzyme-RNA intermediate. The proton acceptor active site deprotonates the incoming PreQ1, allowing a nucleophilic attack on the C1' of the ribose to form the product. After dissociation, two additional enzymatic reactions on the tRNA convert PreQ1 to queuine (Q), resulting in the hypermodified nucleoside queuosine (7-(((4,5-cis-dihydroxy-2-cyclopenten-1-yl)amino)methyl)-7-deazaguanosine). This is Queuine tRNA-ribosyltransferase from Mannheimia succiniciproducens (strain KCTC 0769BP / MBEL55E).